The following is a 352-amino-acid chain: C5a anaphylatoxin chemotactic receptor 1 (352 aa).

Over residues 1-11 (MDPISNDSSEI) the composition is skewed to polar residues. Residues 1-20 (MDPISNDSSEITYDYSDGTP) are disordered. At 1-38 (MDPISNDSSEITYDYSDGTPNPDMPADGVYIPKMEPGD) the chain is on the extracellular side. Asn6 is a glycosylation site (N-linked (GlcNAc...) asparagine). A sulfotyrosine mark is found at Tyr13 and Tyr15. A helical transmembrane segment spans residues 39–65 (IAALIIYLAVFLVGVTGNALVVWVTAF). Residues 66–70 (EAKRT) are Cytoplasmic-facing. Residues 71-94 (VNAIWFLNLAVADLLSCLALPILF) form a helical membrane-spanning segment. Over 95–111 (TSIVKHNHWPFGDQACI) the chain is Extracellular. An intrachain disulfide couples Cys110 to Cys189. A helical membrane pass occupies residues 112–133 (VLPSLILLNMYSSILLLATISA). At 134–154 (DRFLLVFKPIWCQKFRRPGLA) the chain is on the cytoplasmic side. The chain crosses the membrane as a helical span at residues 155–175 (WMACGVTWVLALLLTIPSFVF). At 176–202 (RRIHKDPYSDSILCNIDYSKGPFFIEK) the chain is on the extracellular side. Residues 203-228 (AIAILRLMVGFVLPLLTLNICYTFLL) form a helical membrane-spanning segment. Over 229–244 (IRTWSRKATRSTKTLK) the chain is Cytoplasmic. The helical transmembrane segment at 245-267 (VVMAVVTCFFVFWLPYQVTGVIL) threads the bilayer. At 268–284 (AWLPRSSSTFQSVERLN) the chain is on the extracellular side. The helical transmembrane segment at 285 to 305 (SLCVSLAYINCCVNPIIYVMA) threads the bilayer. Residues 306-352 (GQGFHGRLRRSLPSIIRNVLSEDSLGRDSKSFTRSTMDTSTQKSQAV) lie on the Cytoplasmic side of the membrane. Phosphoserine is present on residues Ser316, Ser319, Ser326, Ser329, Ser334, Ser336, and Ser340. Residues 332–352 (RDSKSFTRSTMDTSTQKSQAV) form a disordered region. Polar residues predominate over residues 337 to 352 (FTRSTMDTSTQKSQAV).

The protein belongs to the G-protein coupled receptor 1 family. Homodimer. May also form higher-order oligomers. Interacts (when phosphorylated) with ARRB1 and ARRB2; the interaction is associated with internalization of C5aR. Post-translationally, sulfation plays a critical role in the association of C5aR with C5a, but no significant role in the ability of the receptor to transduce a signal and mobilize calcium in response to a small peptide agonist. In terms of processing, phosphorylated on serine residues in response to C5a binding, resulting in internalization of the receptor and short-term desensitization to the ligand.

The protein localises to the cell membrane. The protein resides in the cytoplasmic vesicle. Its function is as follows. Receptor for the chemotactic and inflammatory peptide anaphylatoxin C5a. The ligand interacts with at least two sites on the receptor: a high-affinity site on the extracellular N-terminus, and a second site in the transmembrane region which activates downstream signaling events. Receptor activation stimulates chemotaxis, granule enzyme release, intracellular calcium release and superoxide anion production. This chain is C5a anaphylatoxin chemotactic receptor 1 (C5ar1), found in Rattus norvegicus (Rat).